We begin with the raw amino-acid sequence, 346 residues long: [LysW]-lysine/[LysW]-ornithine hydrolase (346 aa).

His-67 contributes to the Zn(2+) binding site. The active site involves Asp-69. Asp-91 provides a ligand contact to Zn(2+). Residue Glu-121 is the Proton acceptor of the active site. Glu-122, Glu-145, and His-316 together coordinate Zn(2+).

This sequence belongs to the peptidase M20A family. LysK subfamily. Zn(2+) serves as cofactor. Co(2+) is required as a cofactor.

It is found in the cytoplasm. It catalyses the reaction [amino-group carrier protein]-C-terminal-gamma-(L-lysyl)-L-glutamate + H2O = [amino-group carrier protein]-C-terminal-L-glutamate + L-lysine. It carries out the reaction [amino-group carrier protein]-C-terminal-gamma-(L-ornithyl)-L-glutamate + H2O = [amino-group carrier protein]-C-terminal-L-glutamate + L-ornithine. The protein operates within amino-acid biosynthesis; L-lysine biosynthesis via AAA pathway; L-lysine from L-alpha-aminoadipate (Thermus route): step 5/5. Its pathway is amino-acid biosynthesis; L-arginine biosynthesis. In terms of biological role, catalyzes the release of L-lysine from [LysW]-gamma-L-lysine and the release of L-ornithine from [LysW]-L-ornithine. This chain is [LysW]-lysine/[LysW]-ornithine hydrolase, found in Sulfurisphaera tokodaii (strain DSM 16993 / JCM 10545 / NBRC 100140 / 7) (Sulfolobus tokodaii).